Reading from the N-terminus, the 104-residue chain is Photosystem II reaction center Psb28 protein (104 aa).

This sequence belongs to the Psb28 family. As to quaternary structure, part of the photosystem II complex.

It localises to the cellular thylakoid membrane. The sequence is that of Photosystem II reaction center Psb28 protein from Synechococcus sp. (strain JA-2-3B'a(2-13)) (Cyanobacteria bacterium Yellowstone B-Prime).